The following is a 481-amino-acid chain: Dynein axonemal assembly factor 8 (481 aa).

Disordered stretches follow at residues 70–91 (DESG…LVPG), 131–233 (LDTK…EGRP), 306–397 (TWKV…PVAS), and 415–454 (RAFR…KKHI). Phosphoserine is present on residues serine 83, serine 145, and serine 147. A compositionally biased stretch (polar residues) spans 144 to 155 (GSQSPPWSSQGE). A compositionally biased stretch (basic and acidic residues) spans 163 to 176 (GKLKTEPSDTDFKN). Residues 177-188 (SAKRRALRRERR) are compositionally biased toward basic residues. Polar residues predominate over residues 198–211 (KVTQAAQNPASGDQ). Residues 310 to 322 (SADKLQDTEEQVA) are compositionally biased toward basic and acidic residues. Over residues 323-336 (RTRSASAESGFQTE) the composition is skewed to polar residues. Serine 328 carries the post-translational modification Phosphoserine. Basic and acidic residues-rich tracts occupy residues 337–349 (RVQK…RLKT) and 359–380 (RLTE…HSSS).

Its subcellular location is the dynein axonemal particle. It is found in the cytoplasm. In terms of biological role, in cyliated cells, dynein axonemal particle-specific protein required for deployment of ODA to the axoneme. Interacts with outer dynein arm (ODA) subunits. The polypeptide is Dynein axonemal assembly factor 8 (Dnaaf8) (Rattus norvegicus (Rat)).